Reading from the N-terminus, the 631-residue chain is Polyadenylate-binding protein 3 (631 aa).

RRM domains are found at residues 11-89 (ASLY…WSQR), 99-175 (GNIF…QFKS), 191-268 (PNVY…RAQK), and 294-370 (VNLY…LAQR). Phosphotyrosine is present on tyrosine 140. Serine 315 carries the post-translational modification Phosphoserine. N6,N6-dimethyllysine; alternate is present on lysine 361. Lysine 361 is covalently cross-linked (Glycyl lysine isopeptide (Lys-Gly) (interchain with G-Cter in SUMO2); alternate). Tyrosine 364 bears the Phosphotyrosine mark. An omega-N-methylarginine mark is found at arginine 426, arginine 430, and arginine 449. Arginine 501 bears the Dimethylated arginine mark. Arginine 513 carries the post-translational modification Omega-N-methylarginine. The PABC domain occupies 537-614 (QETLTASRLA…AVAVLQAHQA (78 aa)).

The protein belongs to the polyadenylate-binding protein type-1 family. As to expression, testis specific.

Its subcellular location is the cytoplasm. In terms of biological role, binds the poly(A) tail of mRNA. May be involved in cytoplasmic regulatory processes of mRNA metabolism. Binds poly(A) with a slightly lower affinity as compared to PABPC1. The sequence is that of Polyadenylate-binding protein 3 (PABPC3) from Homo sapiens (Human).